The following is a 1036-amino-acid chain: Phospholipase D1 (1036 aa).

The PX domain occupies 81–212; it reads IKAQVLEVER…TEFLDVSQLS (132 aa). The PH domain occupies 219-328; the sequence is PKGLEGMIMK…WGGAIEEFIQ (110 aa). 2 S-palmitoyl cysteine lipidation sites follow: Cys240 and Cys241. The PLD phosphodiesterase 1 domain maps to 459-486; that stretch reads YLWAHHEKLVIIDQSVAFVGGIDLAYGR. The segment at 463 to 890 is catalytic; the sequence is HHEKLVIIDQ…MLGKRDSEMA (428 aa). Residues Ser499, Ser561, and Ser591 each carry the phosphoserine modification. Positions 853 to 880 constitute a PLD phosphodiesterase 2 domain; it reads ELIYVHSKLLIADDNTVIIGSANINDRS.

The protein belongs to the phospholipase D family. As to quaternary structure, interacts with PIP5K1B.

The protein localises to the cytoplasm. Its subcellular location is the perinuclear region. It localises to the endoplasmic reticulum membrane. It is found in the golgi apparatus membrane. The protein resides in the late endosome membrane. The catalysed reaction is a 1,2-diacyl-sn-glycero-3-phosphocholine + H2O = a 1,2-diacyl-sn-glycero-3-phosphate + choline + H(+). With respect to regulation, stimulated by phosphatidylinositol 4,5-bisphosphate and phosphatidylinositol 3,4,5-trisphosphate, activated by the phosphokinase C-alpha, by the ADP-ribosylation factor-1 (ARF-1), and to a lesser extent by GTP-binding proteins: RHO A, RAC-1 and CDC42. Functionally, implicated as a critical step in numerous cellular pathways, including signal transduction, membrane trafficking, and the regulation of mitosis. May be involved in the regulation of perinuclear intravesicular membrane traffic. The chain is Phospholipase D1 (PLD1) from Cricetulus griseus (Chinese hamster).